The following is a 294-amino-acid chain: MNFSHLYDIYYNRINKKLFEIIQELPFQDSVLFRAMKYSTLSGGKRLRACLIYATGETFQVNIAALDVISAAVELVHSYSLIHDDLPCIDNDYFRRGKISCHIKYGENFALLAGDALQGLAFNILSNSNMPGVHDSIRLKMIAEFSNAIGYSGMCIGQMLDLEKERKKINISELEKINLYKTAFLIRCSIRLAYFASNNFSKEVLFILDKFSVSIGLAFQIQDDILDLKNDIKKLESKRNKTKNTYPLLIGLKKSKIKIKELYKEAFFTLEILKKNFNVNILKLLTQFIMKRFK.

3 residues coordinate isopentenyl diphosphate: lysine 45, arginine 48, and histidine 77. Mg(2+) contacts are provided by aspartate 84 and aspartate 90. Residue arginine 95 participates in (2E)-geranyl diphosphate binding. Residue arginine 96 participates in isopentenyl diphosphate binding. Positions 181, 182, and 220 each coordinate (2E)-geranyl diphosphate.

It belongs to the FPP/GGPP synthase family. The cofactor is Mg(2+).

It localises to the cytoplasm. It catalyses the reaction isopentenyl diphosphate + (2E)-geranyl diphosphate = (2E,6E)-farnesyl diphosphate + diphosphate. The polypeptide is Farnesyl diphosphate synthase (ispA) (Buchnera aphidicola subsp. Schizaphis graminum (strain Sg)).